The primary structure comprises 158 residues: Ethylene-responsive transcription factor ERF120 (158 aa).

The AP2/ERF DNA-binding region spans 86 to 147 (KHKGVRKKPS…SARRGTKNGE (62 aa)). A disordered region spans residues 134–158 (VGRRSARRGTKNGEEASTKKTTEKN). The span at 144–158 (KNGEEASTKKTTEKN) shows a compositional bias: basic and acidic residues.

This sequence belongs to the AP2/ERF transcription factor family. ERF subfamily.

It is found in the nucleus. Functionally, probably acts as a transcriptional activator. Binds to the GCC-box pathogenesis-related promoter element. May be involved in the regulation of gene expression by stress factors and by components of stress signal transduction pathways. The chain is Ethylene-responsive transcription factor ERF120 (ERF120) from Arabidopsis thaliana (Mouse-ear cress).